Here is a 327-residue protein sequence, read N- to C-terminus: Biotin synthase (327 aa).

In terms of domain architecture, Radical SAM core spans Phe49–Arg282. Positions 67, 71, and 74 each coordinate [4Fe-4S] cluster. [2Fe-2S] cluster-binding residues include Ser110, Cys142, Cys201, and Arg277.

The protein belongs to the radical SAM superfamily. Biotin synthase family. Homodimer. [4Fe-4S] cluster serves as cofactor. It depends on [2Fe-2S] cluster as a cofactor.

It carries out the reaction (4R,5S)-dethiobiotin + (sulfur carrier)-SH + 2 reduced [2Fe-2S]-[ferredoxin] + 2 S-adenosyl-L-methionine = (sulfur carrier)-H + biotin + 2 5'-deoxyadenosine + 2 L-methionine + 2 oxidized [2Fe-2S]-[ferredoxin]. The protein operates within cofactor biosynthesis; biotin biosynthesis; biotin from 7,8-diaminononanoate: step 2/2. Catalyzes the conversion of dethiobiotin (DTB) to biotin by the insertion of a sulfur atom into dethiobiotin via a radical-based mechanism. The polypeptide is Biotin synthase (Methanococcus maripaludis (strain DSM 14266 / JCM 13030 / NBRC 101832 / S2 / LL)).